A 217-amino-acid chain; its full sequence is ATP phosphoribosyltransferase (217 aa).

Belongs to the ATP phosphoribosyltransferase family. Short subfamily. As to quaternary structure, heteromultimer composed of HisG and HisZ subunits.

It is found in the cytoplasm. The enzyme catalyses 1-(5-phospho-beta-D-ribosyl)-ATP + diphosphate = 5-phospho-alpha-D-ribose 1-diphosphate + ATP. Its pathway is amino-acid biosynthesis; L-histidine biosynthesis; L-histidine from 5-phospho-alpha-D-ribose 1-diphosphate: step 1/9. Catalyzes the condensation of ATP and 5-phosphoribose 1-diphosphate to form N'-(5'-phosphoribosyl)-ATP (PR-ATP). Has a crucial role in the pathway because the rate of histidine biosynthesis seems to be controlled primarily by regulation of HisG enzymatic activity. The sequence is that of ATP phosphoribosyltransferase from Prochlorococcus marinus (strain MIT 9313).